The chain runs to 364 residues: MSGLFETLGRRALFAFDAEQAHGLSIAGLKTGLVTCGAPNDPALSVKVAGLQFPNPLGMAAGYDKNAEVPDALLKLGFGFTEIGTITPRPQSGNPRPRIFRLVEDRAVINRLGFNNEGHDAAFKRLSQRAGKSGIVGVNIGANKDAEDRIADYVAGIRRFYQLARYFTVNISSPNTPGLRNLQARDSLRELLSRVLEARNEEGKMCTLKRPVFLKIAPDLANEELDDIAAEATEQKLDGIIISNTTLSRAGLKSAENRDETGGLSGAPLFDRSTIVLARMRERVGPDMPLIGVGGVDSAETALTKIKAGADLVQLYTGLIYRGPNLPAEIVRGLSAAVKREGVTNIAALRDRDTKDWARRELSA.

FMN-binding positions include 61-65 (AGYDK) and T85. A substrate-binding site is contributed by K65. Residue 110-114 (NRLGF) participates in substrate binding. 2 residues coordinate FMN: N139 and N170. Substrate is bound at residue N170. S173 serves as the catalytic Nucleophile. N175 serves as a coordination point for substrate. FMN is bound by residues K215 and S243. 244–245 (NT) is a substrate binding site. Residues G266, G295, and 316-317 (YT) contribute to the FMN site.

The protein belongs to the dihydroorotate dehydrogenase family. Type 2 subfamily. In terms of assembly, monomer. FMN is required as a cofactor.

The protein resides in the cell membrane. The enzyme catalyses (S)-dihydroorotate + a quinone = orotate + a quinol. The protein operates within pyrimidine metabolism; UMP biosynthesis via de novo pathway; orotate from (S)-dihydroorotate (quinone route): step 1/1. Functionally, catalyzes the conversion of dihydroorotate to orotate with quinone as electron acceptor. This chain is Dihydroorotate dehydrogenase (quinone), found in Brucella anthropi (strain ATCC 49188 / DSM 6882 / CCUG 24695 / JCM 21032 / LMG 3331 / NBRC 15819 / NCTC 12168 / Alc 37) (Ochrobactrum anthropi).